A 437-amino-acid chain; its full sequence is MAQSKPAYKVADIKLADFGRKEIILAENEMPGLMAMRSKYGPSQPLKGARIAGCLHMTIQTAVLIETLTALGAEVQWSSCNIFSTQDHAAAAIAQTGVPVYAWKGETDEEYEWCIEQTIVFKDGQPLNMILDDGGDLTNLVHAKYPQYLAGIRGLSEETTTGVHNLAKMLAKGDLKVPAINVNDSVTKSKFDNLYGIRESLPDGIKRATDVMLAGKVAVVAGYGDVGKGSAASLKAFGSRVIVTEIDPINALQAAMEGYEVTTLEEAAPKANIIVTTTGCKDIVTGKHFELLPNDAIVCNVGHFDCEIDVKWLNTNATKKDTIKPQVDRYTLKNGRHVILLAEGRLVNLGCATGHPSFVMSNSFTNQVLAQVELWTKFGTPQEYKLGLYVLPKTLDEEVAYLHLAQLGVKLTKLSDEQASYLGVPVAGPYKPDHYRY.

Substrate contacts are provided by Thr58, Asp133, and Glu158. 159 to 161 (TTT) is an NAD(+) binding site. Lys188 and Asp192 together coordinate substrate. Residues Asn193, 224–229 (GDVGKG), Glu245, 301–303 (VGH), and Asn348 contribute to the NAD(+) site.

It belongs to the adenosylhomocysteinase family. As to quaternary structure, homotetramer. NAD(+) is required as a cofactor.

It catalyses the reaction S-adenosyl-L-homocysteine + H2O = L-homocysteine + adenosine. The protein operates within amino-acid biosynthesis; L-homocysteine biosynthesis; L-homocysteine from S-adenosyl-L-homocysteine: step 1/1. Its function is as follows. Adenosylhomocysteine is a competitive inhibitor of S-adenosyl-L-methionine-dependent methyl transferase reactions; therefore adenosylhomocysteinase may play a key role in the control of methylations via regulation of the intracellular concentration of adenosylhomocysteine. The polypeptide is Adenosylhomocysteinase (ahcy-1) (Caenorhabditis elegans).